We begin with the raw amino-acid sequence, 298 residues long: Aclacinomycin methylesterase RdmC (298 aa).

The region spanning 24–277 is the AB hydrolase-1 domain; the sequence is PALLLVMGGN…LAEIPGMGHA (254 aa). Active-site residues include Ser102, Asp248, and His276.

The protein belongs to the AB hydrolase superfamily. Hydrolase RdmC family. Monomer.

It carries out the reaction aclacinomycin T + H2O = 15-demethylaclacinomycin T + methanol. Its pathway is antibiotic biosynthesis; aclacinomycin biosynthesis. Involved in the biosynthesis of the anthracycline aclacinomycin which is an aromatic polyketide antibiotic that exhibits high cytotoxicity and is widely applied in the chemotherapy of a variety of cancers. Catalyzes the removal of the methoxy group from the C-15 position of aclacinomycin T and A to yield 15-demethoxyaclacinomycin T and A, respectively. The sequence is that of Aclacinomycin methylesterase RdmC (rdmC) from Streptomyces purpurascens.